We begin with the raw amino-acid sequence, 156 residues long: Arginine repressor (156 aa).

Belongs to the ArgR family.

It localises to the cytoplasm. It participates in amino-acid biosynthesis; L-arginine biosynthesis [regulation]. In terms of biological role, regulates arginine biosynthesis genes. The protein is Arginine repressor of Salmonella agona (strain SL483).